A 307-amino-acid polypeptide reads, in one-letter code: Adenosylcobinamide-GDP ribazoletransferase (307 aa).

The next 8 membrane-spanning stretches (helical) occupy residues 22–42 (PLFE…VPGA), 58–78 (PFVG…IGPI), 80–100 (GVIH…WELL), 137–157 (FGLA…ASLV), 161–181 (VWWM…VTAL), 212–232 (TAAL…LTSV), 248–268 (AWLG…AALF), and 283–303 (CIGA…AVVA).

This sequence belongs to the CobS family. Mg(2+) serves as cofactor.

It is found in the cell membrane. The enzyme catalyses alpha-ribazole + adenosylcob(III)inamide-GDP = adenosylcob(III)alamin + GMP + H(+). It catalyses the reaction alpha-ribazole 5'-phosphate + adenosylcob(III)inamide-GDP = adenosylcob(III)alamin 5'-phosphate + GMP + H(+). It functions in the pathway cofactor biosynthesis; adenosylcobalamin biosynthesis; adenosylcobalamin from cob(II)yrinate a,c-diamide: step 7/7. Its function is as follows. Joins adenosylcobinamide-GDP and alpha-ribazole to generate adenosylcobalamin (Ado-cobalamin). Also synthesizes adenosylcobalamin 5'-phosphate from adenosylcobinamide-GDP and alpha-ribazole 5'-phosphate. This is Adenosylcobinamide-GDP ribazoletransferase from Corynebacterium glutamicum (strain ATCC 13032 / DSM 20300 / JCM 1318 / BCRC 11384 / CCUG 27702 / LMG 3730 / NBRC 12168 / NCIMB 10025 / NRRL B-2784 / 534).